The following is a 700-amino-acid chain: ATP-dependent zinc metalloprotease FtsH (700 aa).

At 1–10 the chain is on the cytoplasmic side; sequence MNNNKGGFLR. A helical transmembrane segment spans residues 11-31; that stretch reads SSVFYIFIFLAVVGMVYGLFG. The Extracellular portion of the chain corresponds to 32-130; it reads NDKTTTKTIT…LVTKQAENSG (99 aa). Residues 131-151 traverse the membrane as a helical segment; it reads FWLNLLVSLVPVLLIVAVFYL. Topologically, residues 152 to 700 are cytoplasmic; the sequence is MMNQAGGGKG…ETDDNNTENK (549 aa). 227 to 234 contributes to the ATP binding site; that stretch reads GPPGTGKT. Histidine 449 provides a ligand contact to Zn(2+). Glutamate 450 is an active-site residue. Residues histidine 453 and aspartate 525 each coordinate Zn(2+). Positions 644–700 are disordered; the sequence is KSFEEAKAAADAKDSQAEQRFEKQDEEKSSDDHSESKNEDTDSTDKSETDDNNTENK.

In the central section; belongs to the AAA ATPase family. It in the C-terminal section; belongs to the peptidase M41 family. As to quaternary structure, homohexamer. It depends on Zn(2+) as a cofactor.

The protein localises to the cell membrane. In terms of biological role, acts as a processive, ATP-dependent zinc metallopeptidase for both cytoplasmic and membrane proteins. Plays a role in the quality control of integral membrane proteins. This chain is ATP-dependent zinc metalloprotease FtsH, found in Leuconostoc mesenteroides subsp. mesenteroides (strain ATCC 8293 / DSM 20343 / BCRC 11652 / CCM 1803 / JCM 6124 / NCDO 523 / NBRC 100496 / NCIMB 8023 / NCTC 12954 / NRRL B-1118 / 37Y).